We begin with the raw amino-acid sequence, 179 residues long: Cytochrome b6-f complex iron-sulfur subunit (179 aa).

A helical transmembrane segment spans residues 21–43; the sequence is LLTFGSATGVALGMLYPVVRYFI. The Rieske domain maps to 61-162; the sequence is GNDISVSDFL…AAVSDDKITF (102 aa). Positions 108, 110, 126, and 129 each coordinate [2Fe-2S] cluster. Residues Cys-113 and Cys-128 are joined by a disulfide bond.

This sequence belongs to the Rieske iron-sulfur protein family. In terms of assembly, the 4 large subunits of the cytochrome b6-f complex are cytochrome b6, subunit IV (17 kDa polypeptide, PetD), cytochrome f and the Rieske protein, while the 4 small subunits are PetG, PetL, PetM and PetN. The complex functions as a dimer. [2Fe-2S] cluster is required as a cofactor.

It is found in the cellular thylakoid membrane. It carries out the reaction 2 oxidized [plastocyanin] + a plastoquinol + 2 H(+)(in) = 2 reduced [plastocyanin] + a plastoquinone + 4 H(+)(out). Its function is as follows. Component of the cytochrome b6-f complex, which mediates electron transfer between photosystem II (PSII) and photosystem I (PSI), cyclic electron flow around PSI, and state transitions. The protein is Cytochrome b6-f complex iron-sulfur subunit of Cyanothece sp. (strain PCC 7425 / ATCC 29141).